Reading from the N-terminus, the 292-residue chain is 11-beta-hydroxysteroid dehydrogenase 1 (292 aa).

The Cytoplasmic portion of the chain corresponds to 2–7 (AFMKKY). A helical; Signal-anchor for type II membrane protein transmembrane segment spans residues 8–24 (LLPLLGLFLAYYYYSAN). The Lumenal segment spans residues 25–292 (EEFRPEMLQG…KFDISKLVNN (268 aa)). NADP(+) contacts are provided by residues 41–67 (GASK…TARS), 92–93 (TM), and 119–121 (NHI). Residues Asn123 and Asn162 are each glycosylated (N-linked (GlcNAc...) asparagine). Position 170 (Ser170) interacts with substrate. Residue Tyr183 is the Proton acceptor of the active site. 183–187 (YSASK) contacts NADP(+). Asn207 carries N-linked (GlcNAc...) asparagine glycosylation. Residue 218–222 (IDTDT) coordinates NADP(+).

It belongs to the short-chain dehydrogenases/reductases (SDR) family. As to quaternary structure, homodimer. In terms of processing, glycosylated. In terms of tissue distribution, expressed in the eye.

The protein resides in the endoplasmic reticulum membrane. Its subcellular location is the microsome membrane. It carries out the reaction an 11beta-hydroxysteroid + NADP(+) = an 11-oxosteroid + NADPH + H(+). It catalyses the reaction corticosterone + NADP(+) = 11-dehydrocorticosterone + NADPH + H(+). The catalysed reaction is cortisone + NADPH + H(+) = cortisol + NADP(+). The enzyme catalyses a 7beta-hydroxysteroid + NADP(+) = a 7-oxosteroid + NADPH + H(+). It carries out the reaction 7-oxocholesterol + NADPH + H(+) = 7beta-hydroxycholesterol + NADP(+). It catalyses the reaction chenodeoxycholate + NADP(+) = 7-oxolithocholate + NADPH + H(+). The catalysed reaction is 7-oxolithocholate + NADPH + H(+) = ursodeoxycholate + NADP(+). The enzyme catalyses glycochenodeoxycholate + NADP(+) = 7-oxoglycolithocholate + NADPH + H(+). It carries out the reaction taurochenodeoxycholate + NADP(+) = 7-oxotaurolithocholate + NADPH + H(+). It catalyses the reaction tauroursodeoxycholate + NADP(+) = 7-oxotaurolithocholate + NADPH + H(+). The catalysed reaction is glycoursodeoxycholate + NADP(+) = 7-oxoglycolithocholate + NADPH + H(+). The enzyme catalyses 7-oxopregnenolone + NADPH + H(+) = 7beta-hydroxypregnenolone + NADP(+). It carries out the reaction 3beta,7alpha-dihydroxyandrost-5-en-17-one + NADP(+) = 3beta-hydroxy-5-androstene-7,17-dione + NADPH + H(+). It catalyses the reaction 3beta-hydroxy-5-androstene-7,17-dione + NADPH + H(+) = 3beta,7beta-dihydroxyandrost-5-en-17-one + NADP(+). The catalysed reaction is 3beta-hydroxy-5alpha-androstane-7,17-dione + NADPH + H(+) = 3beta,7beta-dihydroxy-5alpha-androstan-17-one + NADP(+). It participates in steroid metabolism. In terms of biological role, controls the reversible conversion of biologically active glucocorticoids such as cortisone to cortisol, and 11-dehydrocorticosterone to corticosterone in the presence of NADP(H). Participates in the corticosteroid receptor-mediated anti-inflammatory response, as well as metabolic and homeostatic processes. Plays a role in the secretion of aqueous humor in the eye, maintaining a normotensive, intraocular environment. Bidirectional in vitro, predominantly functions as a reductase in vivo, thereby increasing the concentration of active glucocorticoids. It has broad substrate specificity, besides glucocorticoids, it accepts other steroid and sterol substrates. It has broad substrate specificity, besides glucocorticoids, it accepts other steroid and sterol substrates. Interconverts 7-oxo- and 7-hydroxy-neurosteroids such as 7-oxopregnenolone and 7beta-hydroxypregnenolone, 7-oxodehydroepiandrosterone (3beta-hydroxy-5-androstene-7,17-dione) and 7beta-hydroxydehydroepiandrosterone (3beta,7beta-dihydroxyandrost-5-en-17-one), among others. Catalyzes the stereo-specific conversion of the major dietary oxysterol, 7-ketocholesterol (7-oxocholesterol), into the more polar 7-beta-hydroxycholesterol metabolite. 7-oxocholesterol is one of the most important oxysterols, it participates in several events such as induction of apoptosis, accumulation in atherosclerotic lesions, lipid peroxidation, and induction of foam cell formation. Mediates the 7-oxo reduction of 7-oxolithocholate mainly to chenodeoxycholate, and to a lesser extent to ursodeoxycholate, both in its free form and when conjugated to glycine or taurine, providing a link between glucocorticoid activation and bile acid metabolism. Catalyzes the synthesis of 7-beta-25-dihydroxycholesterol from 7-oxo-25-hydroxycholesterol in vitro, which acts as a ligand for the G-protein-coupled receptor (GPCR) Epstein-Barr virus-induced gene 2 (EBI2) and may thereby regulate immune cell migration. The chain is 11-beta-hydroxysteroid dehydrogenase 1 from Oryctolagus cuniculus (Rabbit).